We begin with the raw amino-acid sequence, 370 residues long: Glucan endo-1,3-beta-glucosidase (370 aa).

An N-terminal signal peptide occupies residues 1-32 (MASFFARTRRFSLVSLFLLELFTINLIPTTDA). Q33 is subject to Pyrrolidone carboxylic acid. E127 serves as the catalytic Proton donor. The Nucleophile role is filled by E272. A propeptide spans 348–370 (GERRDGEIVEGDFNGTVSLKSDM) (removed in mature form). N-linked (GlcNAc...) asparagine glycosylation is present at N361.

It belongs to the glycosyl hydrolase 17 family. As to expression, constitutively expressed in seedling roots.

It catalyses the reaction Hydrolysis of (1-&gt;3)-beta-D-glucosidic linkages in (1-&gt;3)-beta-D-glucans.. Implicated in the defense of plants against pathogens. The chain is Glucan endo-1,3-beta-glucosidase from Pisum sativum (Garden pea).